A 312-amino-acid polypeptide reads, in one-letter code: Polyprenyl transferase atnF (312 aa).

The N-linked (GlcNAc...) asparagine glycan is linked to N9. 9 helical membrane-spanning segments follow: residues 30 to 50 (LHTIEGLSTASIGWLALFFYA), 64 to 84 (FIGIFATYQMTHCVFCLWNDI), 111 to 131 (AMWVFVLGVFASMGVTYWLLG), 132 to 152 (ADVTLTMVPIWVLSFIYPLCK), 154 to 174 (IIWAPQVVLGLTMALCVLPPW), 185 to 205 (GLLPASLFGAIFCWLVYLDLI), 229 to 249 (YLKAGLTVLGVLQVVCFVLAA), 255 to 275 (GFLLWVFGIAVWSASVPWSIM), and 288 to 308 (IFLVNAILGIYMAAVSGLNVS).

The protein belongs to the UbiA prenyltransferase family. The cofactor is Mg(2+).

The protein localises to the membrane. Its pathway is secondary metabolite biosynthesis; terpenoid biosynthesis. Its function is as follows. Polyprenyl transferase; part of the gene cluster that mediates the biosynthesis of the meroterpenoids arthripenoids. The pathway begins with the HR-PKS atnH that catalyzes two chain-extension steps to form a reduced triketide, which then primes the SAT domain in the NR-PKS atnG to initiate three more cycles of extension to give a linear hexaketide corresponding to the polyketide part of arthripenoids. The FAD-dependent monooxygenase atnJ then performs an oxidative decarboxylation at C11 of the atnH/atnG product, via an electrophilic aromatic hydroxylation with concomitant ipso-decarboxylation. The membrane-bound polyprenyl transferase atnF then introduces a farnesyl group before the FAD-dependent monooxygenase atnK functions as the first epoxidase on terminal C12'-C13' olefin, followed by a second epoxidation on C7'-C8' catalyzed by atnA. The terpene cyclase/mutase atnI then initiates the sequential tricyclic ring formation through protonation of the terminal epoxide and catalyzes the regioselective and stereoselective 6/6/6-tricyclic ring formation. The cytochrome P450 monooxygenase atnM is responsible for hydroxylating both C1' and C10'. The next steps may involve ketoreduction and acetyl transfer by the ketoreductase atnB and the acetyltransferase atnC, and lead to the production of arthripenoid B, the final biosynthetic product of the atn cluster. The hydroquinone moiety in arthripenoid B is prone to undergo spontaneous oxidation to afford a benzoquinone compound, a key intermediate for generating structure diversity. For instance, addition of a cysteine followed by ring contraction gives arthripenoid A, tautomerization gives the main product arthripenoid C, addition of a molecular of water or amine affords arthripenoid D or E, respectively, and loss of one water forms arthripenoid F. This chain is Polyprenyl transferase atnF, found in Arthrinium sp.